We begin with the raw amino-acid sequence, 172 residues long: Phosphopantetheine adenylyltransferase (172 aa).

Position 13 (Thr13) interacts with substrate. ATP is bound by residues 13–14 (TF) and His21. Substrate contacts are provided by Lys45, Leu81, and Arg95. ATP-binding positions include 96-98 (GLR), Glu106, and 131-137 (SQFISSR).

This sequence belongs to the bacterial CoaD family. Homohexamer. Mg(2+) serves as cofactor.

It is found in the cytoplasm. It carries out the reaction (R)-4'-phosphopantetheine + ATP + H(+) = 3'-dephospho-CoA + diphosphate. Its pathway is cofactor biosynthesis; coenzyme A biosynthesis; CoA from (R)-pantothenate: step 4/5. Its function is as follows. Reversibly transfers an adenylyl group from ATP to 4'-phosphopantetheine, yielding dephospho-CoA (dPCoA) and pyrophosphate. In Rhodospirillum rubrum (strain ATCC 11170 / ATH 1.1.1 / DSM 467 / LMG 4362 / NCIMB 8255 / S1), this protein is Phosphopantetheine adenylyltransferase.